The sequence spans 588 residues: Cryptochrome-1 (588 aa).

A Photolyase/cryptochrome alpha/beta domain is found at 3–132 (VNAVHWFRKG…EVIVRISHTL (130 aa)). K11 is covalently cross-linked (Glycyl lysine isopeptide (Lys-Gly) (interchain with G-Cter in ubiquitin)). The short motif at 50 to 54 (NRWRF) is the LIR 1 element. The residue at position 71 (S71) is a Phosphoserine; by AMPK. The short motif at 82–87 (DVFPRL) is the LIR 2 element. A Glycyl lysine isopeptide (Lys-Gly) (interchain with G-Cter in ubiquitin) cross-link involves residue K107. Residues 151–156 (KRFQTL) carry the LIR 3 motif. K159 is covalently cross-linked (Glycyl lysine isopeptide (Lys-Gly) (interchain with G-Cter in ubiquitin)). At S247 the chain carries Phosphoserine; by MAPK. S252 lines the FAD pocket. Short sequence motifs (LIR) lie at residues 255-260 (LRFGCL) and 271-276 (DLYKKV). S280 bears the Phosphoserine; by AMPK mark. The LIR 6 motif lies at 285 to 290 (SLYGQL). Q289 lines the FAD pocket. Residue K329 forms a Glycyl lysine isopeptide (Lys-Gly) (interchain with G-Cter in ubiquitin) linkage. The LIR 7 signature appears at 335–339 (TGFPW). H355 provides a ligand contact to FAD. The required for inhibition of CLOCK-BMAL1-mediated transcription stretch occupies residues 371 to 470 (WISWEEGMKV…LIGVNYPKPM (100 aa)). Residues 379–384 (KVFEEL) carry the LIR 8 motif. An FAD-binding site is contributed by 387-389 (DAD). 3 consecutive short sequence motifs (LIR) follow at residues 395-400 (GSWMWL), 411-416 (HCYCPV), and 430-435 (RRYLPV). The interval 471 to 493 (VNHAEASRLNIERMKQIYQQLSR) is interaction with TIMELESS. A Glycyl lysine isopeptide (Lys-Gly) (interchain with G-Cter in ubiquitin) cross-link involves residue K485. 2 short sequence motifs (LIR) span residues 486 to 491 (QIYQQL) and 492 to 497 (SRYRGL). The disordered stretch occupies residues 511 to 588 (GGLMGYAPGE…GPKVQRQSSN (78 aa)). The span at 545–568 (DSQQTNPLKQGRSSMGTGLSSGKR) shows a compositional bias: polar residues. K567 is covalently cross-linked (Glycyl lysine isopeptide (Lys-Gly) (interchain with G-Cter in ubiquitin)). Residue S570 is modified to Phosphoserine.

Belongs to the DNA photolyase class-1 family. As to quaternary structure, component of the circadian core oscillator, which includes the CRY proteins, CLOCK or NPAS2, BMAL1 or BMAL2, CSNK1D and/or CSNK1E, TIMELESS, and the PER proteins. Interacts directly with TIMELESS. Interacts directly with PER1, PER2 and PER3; interaction with PER2 inhibits its ubiquitination and vice versa. Interacts with FBXL21. Interacts with FBXL3. Interacts with CLOCK-BMAL1 independently of PER2 and DNA. Interacts with HDAC1, HDAC2 and SIN3B. Interacts with nuclear receptors AR, NR1D1, NR3C1/GR, RORA and RORC; the interaction with at least NR3C1/GR is ligand dependent. Interacts with PRKDC. Interacts with the G protein subunit alpha GNAS; the interaction may block GPCR-mediated regulation of cAMP concentrations. Interacts with PRMT5. Interacts with EZH2. Interacts with MYBBP1A, DOCK7, HNRNPU, RPL7A, RPL8 and RPS3. Interacts with PPP5C (via TPR repeats). Interacts with MAP1LC3B. Interacts with CLOCK. Interacts with BMAL1. Interacts weakly with HDAC3; this interaction is enhanced in the presence of FBXL3. Interacts with TRIM28, KCTD5 and DDB1. Interacts with FOXO1. Interacts with DTL and DDB1-CUL4A complex. Interacts with HNF4A. Interacts with PSMD2 in a KDM8-dependent manner. Interacts with KDM8 in a FBXL3-dependent manner. Interacts with PPARG in a ligand-dependent manner. Interacts with PPARD (via domain NR LBD) and NR1I2 (via domain NR LBD) in a ligand-dependent manner. Interacts with PPARA, NR1I3 and VDR. FAD serves as cofactor. (6R)-5,10-methylene-5,6,7,8-tetrahydrofolate is required as a cofactor. Post-translationally, phosphorylation on Ser-247 by MAPK is important for the inhibition of CLOCK-BMAL1-mediated transcriptional activity. Phosphorylation by CSNK1E requires interaction with PER1 or PER2. Phosphorylation at Ser-71 and Ser-280 by AMPK decreases protein stability. Phosphorylation at Ser-570 exhibits a robust circadian rhythm with a peak at CT8, increases protein stability, prevents SCF(FBXL3)-mediated degradation and is antagonized by interaction with PRKDC. Ubiquitinated by the SCF(FBXL3) and SCF(FBXL21) complexes, regulating the balance between degradation and stabilization. The SCF(FBXL3) complex is mainly nuclear and mediates ubiquitination and subsequent degradation of CRY1. In contrast, cytoplasmic SCF(FBXL21) complex-mediated ubiquitination leads to stabilize CRY1 and counteract the activity of the SCF(FBXL3) complex. The SCF(FBXL3) and SCF(FBXL21) complexes probably mediate ubiquitination at different Lys residues. Ubiquitination at Lys-11 and Lys-107 are specifically ubiquitinated by the SCF(FBXL21) complex but not by the SCF(FBXL3) complex. Ubiquitination may be inhibited by PER2. Deubiquitinated by USP7. In terms of processing, undergoes autophagy-mediated degradation in the liver in a time-dependent manner. Autophagic degradation of CRY1 (an inhibitor of gluconeogenesis) occurs during periods of reduced feeding allowing induction of gluconeogenesis and maintenance of blood glucose levels.

The protein localises to the cytoplasm. Its subcellular location is the nucleus. Its function is as follows. Transcriptional repressor which forms a core component of the circadian clock. The circadian clock, an internal time-keeping system, regulates various physiological processes through the generation of approximately 24 hour circadian rhythms in gene expression, which are translated into rhythms in metabolism and behavior. It is derived from the Latin roots 'circa' (about) and 'diem' (day) and acts as an important regulator of a wide array of physiological functions including metabolism, sleep, body temperature, blood pressure, endocrine, immune, cardiovascular, and renal function. Consists of two major components: the central clock, residing in the suprachiasmatic nucleus (SCN) of the brain, and the peripheral clocks that are present in nearly every tissue and organ system. Both the central and peripheral clocks can be reset by environmental cues, also known as Zeitgebers (German for 'timegivers'). The predominant Zeitgeber for the central clock is light, which is sensed by retina and signals directly to the SCN. The central clock entrains the peripheral clocks through neuronal and hormonal signals, body temperature and feeding-related cues, aligning all clocks with the external light/dark cycle. Circadian rhythms allow an organism to achieve temporal homeostasis with its environment at the molecular level by regulating gene expression to create a peak of protein expression once every 24 hours to control when a particular physiological process is most active with respect to the solar day. Transcription and translation of core clock components (CLOCK, NPAS2, BMAL1, BMAL2, PER1, PER2, PER3, CRY1 and CRY2) plays a critical role in rhythm generation, whereas delays imposed by post-translational modifications (PTMs) are important for determining the period (tau) of the rhythms (tau refers to the period of a rhythm and is the length, in time, of one complete cycle). A diurnal rhythm is synchronized with the day/night cycle, while the ultradian and infradian rhythms have a period shorter and longer than 24 hours, respectively. Disruptions in the circadian rhythms contribute to the pathology of cardiovascular diseases, cancer, metabolic syndromes and aging. A transcription/translation feedback loop (TTFL) forms the core of the molecular circadian clock mechanism. Transcription factors, CLOCK or NPAS2 and BMAL1 or BMAL2, form the positive limb of the feedback loop, act in the form of a heterodimer and activate the transcription of core clock genes and clock-controlled genes (involved in key metabolic processes), harboring E-box elements (5'-CACGTG-3') within their promoters. The core clock genes: PER1/2/3 and CRY1/2 which are transcriptional repressors form the negative limb of the feedback loop and interact with the CLOCK|NPAS2-BMAL1|BMAL2 heterodimer inhibiting its activity and thereby negatively regulating their own expression. This heterodimer also activates nuclear receptors NR1D1/2 and RORA/B/G, which form a second feedback loop and which activate and repress BMAL1 transcription, respectively. CRY1 and CRY2 have redundant functions but also differential and selective contributions at least in defining the pace of the SCN circadian clock and its circadian transcriptional outputs. More potent transcriptional repressor in cerebellum and liver than CRY2, though more effective in lengthening the period of the SCN oscillator. On its side, CRY2 seems to play a critical role in tuning SCN circadian period by opposing the action of CRY1. With CRY2, is dispensable for circadian rhythm generation but necessary for the development of intercellular networks for rhythm synchrony. Capable of translocating circadian clock core proteins such as PER proteins to the nucleus. Interacts with CLOCK-BMAL1 independently of PER proteins and is found at CLOCK-BMAL1-bound sites, suggesting that CRY may act as a molecular gatekeeper to maintain CLOCK-BMAL1 in a poised and repressed state until the proper time for transcriptional activation. Represses the CLOCK-BMAL1 induced transcription of BHLHE40/DEC1, ATF4, MTA1, KLF10 and NAMPT. May repress circadian target genes expression in collaboration with HDAC1 and HDAC2 through histone deacetylation. Mediates the clock-control activation of ATR and modulates ATR-mediated DNA damage checkpoint. In liver, mediates circadian regulation of cAMP signaling and gluconeogenesis by binding to membrane-coupled G proteins and blocking glucagon-mediated increases in intracellular cAMP concentrations and CREB1 phosphorylation. Inhibits hepatic gluconeogenesis by decreasing nuclear FOXO1 levels that down-regulates gluconeogenic gene expression. Besides its role in the maintenance of the circadian clock, is also involved in the regulation of other processes. Represses glucocorticoid receptor NR3C1/GR-induced transcriptional activity by binding to glucocorticoid response elements (GREs). Plays a key role in glucose and lipid metabolism modulation, in part, through the transcriptional regulation of genes involved in these pathways, such as LEP or ACSL4. Represses PPARD and its target genes in the skeletal muscle and limits exercise capacity. Plays an essential role in the generation of circadian rhythms in the retina. Represses the transcriptional activity of NR1I2. In Rattus norvegicus (Rat), this protein is Cryptochrome-1 (Cry1).